We begin with the raw amino-acid sequence, 301 residues long: Acetylglutamate kinase (301 aa).

Substrate is bound by residues 68 to 69 (GG), Arg-90, and Asn-195.

Belongs to the acetylglutamate kinase family. ArgB subfamily.

It localises to the cytoplasm. The enzyme catalyses N-acetyl-L-glutamate + ATP = N-acetyl-L-glutamyl 5-phosphate + ADP. The protein operates within amino-acid biosynthesis; L-arginine biosynthesis; N(2)-acetyl-L-ornithine from L-glutamate: step 2/4. Functionally, catalyzes the ATP-dependent phosphorylation of N-acetyl-L-glutamate. This Pseudomonas fluorescens (strain Pf0-1) protein is Acetylglutamate kinase.